Consider the following 109-residue polypeptide: Putative glutaredoxin-C11 (109 aa).

One can recognise a Glutaredoxin domain in the interval 2–108; sequence AEMVARLASE…PLLKSAGALW (107 aa). Cys22 and Cys25 form a disulfide bridge. Positions 106 to 109 match the Responsive for interaction with TGA factors motif; that stretch reads ALWL.

Belongs to the glutaredoxin family. CC-type subfamily.

The protein localises to the cytoplasm. It localises to the nucleus. Functionally, has a glutathione-disulfide oxidoreductase activity in the presence of NADPH and glutathione reductase. Reduces low molecular weight disulfides and proteins. The polypeptide is Putative glutaredoxin-C11 (GRXC11) (Oryza sativa subsp. japonica (Rice)).